The chain runs to 563 residues: Type 2 DNA topoisomerase 6 subunit B (563 aa).

ATP is bound by residues Asn-46, Asp-78, 99-100 (TK), 109-116 (GQQGIGIS), and Lys-471.

Belongs to the TOP6B family. As to quaternary structure, homodimer. Heterotetramer of two Top6A and two Top6B chains.

The catalysed reaction is ATP-dependent breakage, passage and rejoining of double-stranded DNA.. Relaxes both positive and negative superturns and exhibits a strong decatenase activity. This Thermococcus onnurineus (strain NA1) protein is Type 2 DNA topoisomerase 6 subunit B.